Here is a 271-residue protein sequence, read N- to C-terminus: MKNNYTSLKSPLDEEDELKTDHEIDLEKGLLPEYNSEEEGALPPYSDISKLAKTVPEDSSTGPTETANPNVERRQGFKDSHPNIYSLLRLLISVLAVSVVFFTAWVCVNPLEKSIFGKVAFSVTIGITCPILFIAIFCFFETWTQAVAQCIKVTAIFLAQCVKACGKGIKHFLKKWENMPMAFSEVFLFNILVGSPRMNLRYIFGDRWGLKCSLAEHITFVVLSILVFIAETVKPGSIRVNLIRKMGYEAKQQVNEYTAVPLREMNPESEA.

Disordered regions lie at residues 1-24 and 54-75; these read MKNN…DHEI and TVPE…ERRQ. Positions 57–69 are enriched in polar residues; sequence EDSSTGPTETANP. A run of 4 helical transmembrane segments spans residues 90 to 110, 120 to 140, 176 to 196, and 213 to 233; these read LLIS…CVNP, AFSV…FCFF, WENM…VGSP, and SLAE…AETV.

Belongs to the WTF family. Homomer. Interacts with other proteins that exhibit high sequence similarity.

It is found in the spore membrane. The protein localises to the vacuole membrane. Functionally, acts as a suppressor component of the dual wtf meiotic drive system, and can suppress but not confer meiotic drive by compatible poisons. Wtf meiotic drive systems promote unequal transmission of alleles from the parental zygote to progeny spores by encoding a poison and an antidote from the same locus; the poison is trans-acting and forms toxic aggregates in all spores within an ascus, wherease the antidote is spore-specific and targets aggregates for degradation by the vacuole. Meiotic drive by wtf systems therefore lead to poisoning of all progeny that do not inherit the dual poison/antidote allele, or express a compatible antidote. The protein is Meiotic drive suppressor wtf35 of Schizosaccharomyces kambucha (Fission yeast).